Here is a 282-residue protein sequence, read N- to C-terminus: Ribosomal RNA small subunit methyltransferase A (282 aa).

Positions 1 to 21 (MPDFPKEHATPMSNRPPAHQA) are disordered. S-adenosyl-L-methionine-binding residues include Asn28, Leu30, Gly55, Glu76, Asp101, and Asn126.

It belongs to the class I-like SAM-binding methyltransferase superfamily. rRNA adenine N(6)-methyltransferase family. RsmA subfamily.

Its subcellular location is the cytoplasm. It carries out the reaction adenosine(1518)/adenosine(1519) in 16S rRNA + 4 S-adenosyl-L-methionine = N(6)-dimethyladenosine(1518)/N(6)-dimethyladenosine(1519) in 16S rRNA + 4 S-adenosyl-L-homocysteine + 4 H(+). Functionally, specifically dimethylates two adjacent adenosines (A1518 and A1519) in the loop of a conserved hairpin near the 3'-end of 16S rRNA in the 30S particle. May play a critical role in biogenesis of 30S subunits. This chain is Ribosomal RNA small subunit methyltransferase A, found in Chromohalobacter salexigens (strain ATCC BAA-138 / DSM 3043 / CIP 106854 / NCIMB 13768 / 1H11).